Reading from the N-terminus, the 355-residue chain is Phenylalanine--tRNA ligase alpha subunit (355 aa).

E273 lines the Mg(2+) pocket.

This sequence belongs to the class-II aminoacyl-tRNA synthetase family. Phe-tRNA synthetase alpha subunit type 1 subfamily. In terms of assembly, tetramer of two alpha and two beta subunits. Mg(2+) is required as a cofactor.

It localises to the cytoplasm. It carries out the reaction tRNA(Phe) + L-phenylalanine + ATP = L-phenylalanyl-tRNA(Phe) + AMP + diphosphate + H(+). The polypeptide is Phenylalanine--tRNA ligase alpha subunit (Bifidobacterium animalis subsp. lactis (strain AD011)).